Consider the following 525-residue polypeptide: GMP synthase [glutamine-hydrolyzing] (525 aa).

In terms of domain architecture, Glutamine amidotransferase type-1 spans 13 to 202; the sequence is TILVLDFGSQ…AVDLCHAKQN (190 aa). C89 serves as the catalytic Nucleophile. Residues H176 and E178 contribute to the active site. One can recognise a GMPS ATP-PPase domain in the interval 203–400; the sequence is WTMENFIDTE…LGIPHDLVWR (198 aa). Position 231 to 237 (231 to 237) interacts with ATP; sequence SGGVDST. K241 participates in a covalent cross-link: Glycyl lysine isopeptide (Lys-Gly) (interchain with G-Cter in ubiquitin). R304 lines the XMP pocket. K426 is covalently cross-linked (Glycyl lysine isopeptide (Lys-Gly) (interchain with G-Cter in ubiquitin)). Residues D462, K517, and E523 each contribute to the XMP site.

In terms of assembly, homodimer. Requires Mg(2+) as cofactor.

It localises to the cytoplasm. Its subcellular location is the cytosol. The catalysed reaction is XMP + L-glutamine + ATP + H2O = GMP + L-glutamate + AMP + diphosphate + 2 H(+). It participates in purine metabolism; GMP biosynthesis; GMP from XMP (L-Gln route): step 1/1. Functionally, catalyzes the conversion of xanthine monophosphate (XMP) to GMP in the presence of glutamine and ATP through an adenyl-XMP intermediate. The protein is GMP synthase [glutamine-hydrolyzing] of Saccharomyces cerevisiae (strain ATCC 204508 / S288c) (Baker's yeast).